A 344-amino-acid chain; its full sequence is Outer membrane protein B (344 aa).

Residues 1 to 30 (MNSKMLKHLRLATLSFSMFFGIVSSPAVYA) form the signal peptide.

Belongs to the chlamydial OMP family.

It localises to the cell outer membrane. This Chlamydia pneumoniae (Chlamydophila pneumoniae) protein is Outer membrane protein B (ompB).